Reading from the N-terminus, the 25-residue chain is Antimicrobial peptide THP3 (25 aa).

The protein localises to the secreted. Functionally, bactericidal activity; inhibits Staphylococcus aureus. This is Antimicrobial peptide THP3 from Meleagris gallopavo (Wild turkey).